We begin with the raw amino-acid sequence, 456 residues long: Protein odr-4 homolog (456 aa).

The span at 374-401 (IESSKNNNNNNNNNNNNNNNNNNNNSKL) shows a compositional bias: low complexity. The segment at 374-403 (IESSKNNNNNNNNNNNNNNNNNNNNSKLSN) is disordered. Residues 436–456 (YLIIIISVLVLMVAFYFKFFV) form a helical membrane-spanning segment.

This sequence belongs to the ODR-4 family.

It is found in the membrane. Its function is as follows. May play a role in the trafficking of a subset of G-protein coupled receptors. This Dictyostelium discoideum (Social amoeba) protein is Protein odr-4 homolog.